Consider the following 214-residue polypeptide: Pyridoxine/pyridoxamine 5'-phosphate oxidase (214 aa).

Substrate contacts are provided by residues 8 to 11 (RINY) and lysine 66. Residues 61–66 (RIVLIK), 76–77 (FT), arginine 82, lysine 83, and glutamine 105 contribute to the FMN site. The substrate site is built by tyrosine 123, arginine 127, and serine 131. FMN contacts are provided by residues 140 to 141 (QS) and tryptophan 184. 190-192 (RLH) serves as a coordination point for substrate. An FMN-binding site is contributed by arginine 194.

This sequence belongs to the pyridoxamine 5'-phosphate oxidase family. In terms of assembly, homodimer. FMN is required as a cofactor.

The enzyme catalyses pyridoxamine 5'-phosphate + O2 + H2O = pyridoxal 5'-phosphate + H2O2 + NH4(+). It catalyses the reaction pyridoxine 5'-phosphate + O2 = pyridoxal 5'-phosphate + H2O2. It participates in cofactor metabolism; pyridoxal 5'-phosphate salvage; pyridoxal 5'-phosphate from pyridoxamine 5'-phosphate: step 1/1. Its pathway is cofactor metabolism; pyridoxal 5'-phosphate salvage; pyridoxal 5'-phosphate from pyridoxine 5'-phosphate: step 1/1. Its function is as follows. Catalyzes the oxidation of either pyridoxine 5'-phosphate (PNP) or pyridoxamine 5'-phosphate (PMP) into pyridoxal 5'-phosphate (PLP). The protein is Pyridoxine/pyridoxamine 5'-phosphate oxidase of Burkholderia orbicola (strain MC0-3).